A 148-amino-acid polypeptide reads, in one-letter code: SsrA-binding protein (148 aa).

It belongs to the SmpB family.

It localises to the cytoplasm. Its function is as follows. Required for rescue of stalled ribosomes mediated by trans-translation. Binds to transfer-messenger RNA (tmRNA), required for stable association of tmRNA with ribosomes. tmRNA and SmpB together mimic tRNA shape, replacing the anticodon stem-loop with SmpB. tmRNA is encoded by the ssrA gene; the 2 termini fold to resemble tRNA(Ala) and it encodes a 'tag peptide', a short internal open reading frame. During trans-translation Ala-aminoacylated tmRNA acts like a tRNA, entering the A-site of stalled ribosomes, displacing the stalled mRNA. The ribosome then switches to translate the ORF on the tmRNA; the nascent peptide is terminated with the 'tag peptide' encoded by the tmRNA and targeted for degradation. The ribosome is freed to recommence translation, which seems to be the essential function of trans-translation. This Mycoplasma mycoides subsp. mycoides SC (strain CCUG 32753 / NCTC 10114 / PG1) protein is SsrA-binding protein.